Reading from the N-terminus, the 326-residue chain is MQTALLKPKIIAVEPLGDHHAKVVMEPFERGYGHTLGNALRRVLLSSMVGYAPTEVTIAGVVHEYSTIDGVQEDVVNLLLNLKGVVFKLHNRDEVTVSLRKDGEGIVTAADIELPHDVEIINPNHVIAHLSAGGKLDMQIKVEQGRGYVPGNVRKFGDESSKVIGRIVLDASFSPVRRVSYAVESARVEQRTDLDKLVMNIETDGVISPEEAIRQSARILVDQLSVFAALEGTESAAEAASSRAPQIDPILLRPVDDLELTVRSANCLKAENIYYIGDLIQRTENELLKTPNLGRKSLNEIKEVLASRGLTLGMKLENWPPAGLDK.

Residues 1–231 (MQTALLKPKI…DQLSVFAALE (231 aa)) are alpha N-terminal domain (alpha-NTD). Residues 247 to 326 (IDPILLRPVD…ENWPPAGLDK (80 aa)) form an alpha C-terminal domain (alpha-CTD) region.

Belongs to the RNA polymerase alpha chain family. As to quaternary structure, homodimer. The RNAP catalytic core consists of 2 alpha, 1 beta, 1 beta' and 1 omega subunit. When a sigma factor is associated with the core the holoenzyme is formed, which can initiate transcription.

The catalysed reaction is RNA(n) + a ribonucleoside 5'-triphosphate = RNA(n+1) + diphosphate. DNA-dependent RNA polymerase catalyzes the transcription of DNA into RNA using the four ribonucleoside triphosphates as substrates. In Cupriavidus pinatubonensis (strain JMP 134 / LMG 1197) (Cupriavidus necator (strain JMP 134)), this protein is DNA-directed RNA polymerase subunit alpha.